The chain runs to 434 residues: Salicylate hydroxylase (434 aa).

9-38 contributes to the FAD binding site; sequence RIGIVGGGISGVALALELCRYSHIQVQLFE.

In terms of assembly, monomer. FAD is required as a cofactor.

It carries out the reaction salicylate + NADH + O2 + 2 H(+) = catechol + CO2 + NAD(+) + H2O. It participates in aromatic compound metabolism; naphthalene degradation. This chain is Salicylate hydroxylase (nahG), found in Pseudomonas putida (Arthrobacter siderocapsulatus).